The primary structure comprises 205 residues: Ribosomal RNA small subunit methyltransferase G (205 aa).

Residues Gly-73, Leu-78, Val-124–Glu-125, and Arg-139 contribute to the S-adenosyl-L-methionine site.

Belongs to the methyltransferase superfamily. RNA methyltransferase RsmG family.

Its subcellular location is the cytoplasm. The catalysed reaction is guanosine(527) in 16S rRNA + S-adenosyl-L-methionine = N(7)-methylguanosine(527) in 16S rRNA + S-adenosyl-L-homocysteine. Functionally, specifically methylates the N7 position of guanine in position 527 of 16S rRNA. This is Ribosomal RNA small subunit methyltransferase G from Erwinia tasmaniensis (strain DSM 17950 / CFBP 7177 / CIP 109463 / NCPPB 4357 / Et1/99).